Here is a 368-residue protein sequence, read N- to C-terminus: DNA replication and repair protein RecF (368 aa).

30–37 (GKNGSGKT) provides a ligand contact to ATP.

Belongs to the RecF family.

The protein resides in the cytoplasm. Functionally, the RecF protein is involved in DNA metabolism; it is required for DNA replication and normal SOS inducibility. RecF binds preferentially to single-stranded, linear DNA. It also seems to bind ATP. The chain is DNA replication and repair protein RecF from Marinomonas sp. (strain MWYL1).